We begin with the raw amino-acid sequence, 442 residues long: tRNA-2-methylthio-N(6)-dimethylallyladenosine synthase (442 aa).

One can recognise an MTTase N-terminal domain in the interval 2–120 (KKVFIRTFGC…LPKMIVDKET (119 aa)). [4Fe-4S] cluster-binding residues include cysteine 11, cysteine 49, cysteine 83, cysteine 157, cysteine 161, and cysteine 164. The Radical SAM core domain occupies 143 to 375 (RVEGGAAFVS…NEVIEAETAR (233 aa)). The TRAM domain maps to 378–441 (QTMIGTVQRC…TFSLRGKVVE (64 aa)).

It belongs to the methylthiotransferase family. MiaB subfamily. Monomer. Requires [4Fe-4S] cluster as cofactor.

The protein resides in the cytoplasm. It carries out the reaction N(6)-dimethylallyladenosine(37) in tRNA + (sulfur carrier)-SH + AH2 + 2 S-adenosyl-L-methionine = 2-methylsulfanyl-N(6)-dimethylallyladenosine(37) in tRNA + (sulfur carrier)-H + 5'-deoxyadenosine + L-methionine + A + S-adenosyl-L-homocysteine + 2 H(+). In terms of biological role, catalyzes the methylthiolation of N6-(dimethylallyl)adenosine (i(6)A), leading to the formation of 2-methylthio-N6-(dimethylallyl)adenosine (ms(2)i(6)A) at position 37 in tRNAs that read codons beginning with uridine. This is tRNA-2-methylthio-N(6)-dimethylallyladenosine synthase from Neisseria meningitidis serogroup C (strain 053442).